The sequence spans 201 residues: 5'(3')-deoxyribonucleotidase, cytosolic type (201 aa).

Asp10 acts as the Nucleophile in catalysis. Positions 10 and 12 each coordinate Mg(2+). Asp12 acts as the Proton donor in catalysis. The substrate site is built by Phe18, Phe44, Tyr65, Thr99, and Lys134. Asp145 is a Mg(2+) binding site. Ser182 carries the phosphoserine modification.

It belongs to the 5'(3')-deoxyribonucleotidase family. As to quaternary structure, homodimer. The cofactor is Mg(2+). In terms of tissue distribution, detected in skeletal muscle, heart and pancreas.

Its subcellular location is the cytoplasm. Dephosphorylates the 5' and 2'(3')-phosphates of deoxyribonucleotides, with a preference for dUMP and dTMP, intermediate activity towards dGMP, and low activity towards dCMP and dAMP. The protein is 5'(3')-deoxyribonucleotidase, cytosolic type (NT5C) of Homo sapiens (Human).